The following is a 568-amino-acid chain: Urease subunit alpha (568 aa).

One can recognise a Urease domain in the interval 131–568 (GGMDAHIHFI…LPLAQRYFLY (438 aa)). Ni(2+) contacts are provided by histidine 136, histidine 138, and lysine 219. Lysine 219 carries the post-translational modification N6-carboxylysine. Histidine 221 serves as a coordination point for substrate. Residues histidine 248 and histidine 274 each contribute to the Ni(2+) site. Histidine 322 acts as the Proton donor in catalysis. Aspartate 362 contacts Ni(2+).

This sequence belongs to the metallo-dependent hydrolases superfamily. Urease alpha subunit family. As to quaternary structure, heterotrimer of UreA (gamma), UreB (beta) and UreC (alpha) subunits. Three heterotrimers associate to form the active enzyme. Ni cation is required as a cofactor. Carboxylation allows a single lysine to coordinate two nickel ions.

Its subcellular location is the cytoplasm. It carries out the reaction urea + 2 H2O + H(+) = hydrogencarbonate + 2 NH4(+). Its pathway is nitrogen metabolism; urea degradation; CO(2) and NH(3) from urea (urease route): step 1/1. This Cereibacter sphaeroides (strain KD131 / KCTC 12085) (Rhodobacter sphaeroides) protein is Urease subunit alpha.